We begin with the raw amino-acid sequence, 186 residues long: EF-hand protein 5 (186 aa).

Residues 1–23 are disordered; it reads MSRSKEVSPNLSQQKRGDVRSAG. EF-hand domains lie at 41–76, 77–112, 113–148, and 149–186; these read SAEL…GLHT, SEEE…GIDE, ASIA…SGEH, and SSAE…LNKM. Residues Glu98, Asp126, and Thr130 each coordinate Ca(2+).

This Leishmania tarentolae (Sauroleishmania tarentolae) protein is EF-hand protein 5.